A 648-amino-acid chain; its full sequence is Threonine--tRNA ligase (648 aa).

Residues Met1–Thr63 form the TGS domain. The interval Asp247–Pro544 is catalytic. Zn(2+)-binding residues include Cys344, His395, and His521.

Belongs to the class-II aminoacyl-tRNA synthetase family. As to quaternary structure, homodimer. It depends on Zn(2+) as a cofactor.

The protein resides in the cytoplasm. The enzyme catalyses tRNA(Thr) + L-threonine + ATP = L-threonyl-tRNA(Thr) + AMP + diphosphate + H(+). Catalyzes the attachment of threonine to tRNA(Thr) in a two-step reaction: L-threonine is first activated by ATP to form Thr-AMP and then transferred to the acceptor end of tRNA(Thr). Also edits incorrectly charged L-seryl-tRNA(Thr). The protein is Threonine--tRNA ligase of Roseobacter denitrificans (strain ATCC 33942 / OCh 114) (Erythrobacter sp. (strain OCh 114)).